An 85-amino-acid chain; its full sequence is U4-theraphotoxin-Hhn1a (85 aa).

A signal peptide spans 1 to 22; sequence MKVTLIAILTCAAVLVLRTTAA. Positions 23-48 are excised as a propeptide; that stretch reads EELEAESQLMEVGMPDTELAAVDEER. 3 disulfides stabilise this stretch: C52–C66, C56–C77, and C71–C82.

Belongs to the neurotoxin 12 (Hwtx-2) family. 02 (Hwtx-2) subfamily. Monomer. As to expression, expressed by the venom gland.

The protein localises to the secreted. Its function is as follows. Neurotoxin active on both insects and mammals. The polypeptide is U4-theraphotoxin-Hhn1a (Cyriopagopus hainanus (Chinese bird spider)).